We begin with the raw amino-acid sequence, 405 residues long: Putative arsenical pump-driving ATPase (405 aa).

8-15 (GKGGVGKT) is an ATP binding site.

This sequence belongs to the arsA ATPase family.

It catalyses the reaction arsenite(in) + ATP + H2O = arsenite(out) + ADP + phosphate + H(+). Functionally, anion-transporting ATPase. Catalyzes the extrusion of arsenite. The protein is Putative arsenical pump-driving ATPase of Chlorobaculum tepidum (strain ATCC 49652 / DSM 12025 / NBRC 103806 / TLS) (Chlorobium tepidum).